The primary structure comprises 747 residues: Elongation factor G, mitochondrial (747 aa).

Residues 1-32 constitute a mitochondrion transit peptide; sequence MTLITRVLNGNLPLRLSTLKAARQLQCGYSSH. The 278-residue stretch at 42 to 319 folds into the tr-type G domain; the sequence is ERIRNIGISA…AVVDYLPNPG (278 aa). GTP is bound by residues 51–58, 118–122, and 172–175; these read AHIDSGKT, DTPGH, and NKLD.

The protein belongs to the TRAFAC class translation factor GTPase superfamily. Classic translation factor GTPase family. EF-G/EF-2 subfamily.

The protein localises to the mitochondrion. Its pathway is protein biosynthesis; polypeptide chain elongation. Functionally, mitochondrial GTPase that catalyzes the GTP-dependent ribosomal translocation step during translation elongation. During this step, the ribosome changes from the pre-translocational (PRE) to the post-translocational (POST) state as the newly formed A-site-bound peptidyl-tRNA and P-site-bound deacylated tRNA move to the P and E sites, respectively. Catalyzes the coordinated movement of the two tRNA molecules, the mRNA and conformational changes in the ribosome. Essential during development as it acts as a retrograde signal from mitochondria to the nucleus to slow down cell proliferation if mitochondrial energy output is low. The polypeptide is Elongation factor G, mitochondrial (Drosophila mojavensis (Fruit fly)).